The chain runs to 382 residues: MAALDPITPAGGGTWRFPANEPLRLDSGGVIEGLEIAYQTYGQLNADKSNAVLICHALTGDQHVASPHPTTGKPGWWQRLVGPGKPLDPARHFIICSNVIGGCMGSTGPASINPATGKTYGLSFPVITIADMVRAQAMLVSALGVETLFAVVGGSMGGMQVQQWAVDYPERMFSAVVLASASRHSAQNIAFHEVGRQAIMADPDWRGGAYAEHGVRPEKGLAVARMAAHITYLSEPALQRKFGRELQRDGLSWGFDADFQVESYLRHQGSSFVDRFDANSYLYITRAMDYFDIAASHGGVLAKAFTRARNVRFCVLSFSSDWLYPTAENRHLVRALTAAGARAAFAEIESDKGHDAFLLDEPVMDAALEGFLASAERDRGLV.

Residues 50-360 (NAVLICHALT…DKGHDAFLLD (311 aa)) form the AB hydrolase-1 domain. The active-site Nucleophile is serine 155. Arginine 225 provides a ligand contact to substrate. Catalysis depends on residues aspartate 321 and histidine 354. Residue aspartate 355 coordinates substrate.

The protein belongs to the AB hydrolase superfamily. MetX family. Homodimer.

It is found in the cytoplasm. It carries out the reaction L-homoserine + acetyl-CoA = O-acetyl-L-homoserine + CoA. It functions in the pathway amino-acid biosynthesis; L-methionine biosynthesis via de novo pathway; O-acetyl-L-homoserine from L-homoserine: step 1/1. Transfers an acetyl group from acetyl-CoA to L-homoserine, forming acetyl-L-homoserine. The polypeptide is Homoserine O-acetyltransferase (Caulobacter vibrioides (strain ATCC 19089 / CIP 103742 / CB 15) (Caulobacter crescentus)).